The chain runs to 35 residues: Photosystem II reaction center protein Psb30 (35 aa).

A helical membrane pass occupies residues valine 7 to leucine 27.

Belongs to the Psb30/Ycf12 family. PSII is composed of 1 copy each of membrane proteins PsbA, PsbB, PsbC, PsbD, PsbE, PsbF, PsbH, PsbI, PsbJ, PsbK, PsbL, PsbM, PsbT, PsbX, PsbY, PsbZ, Psb30/Ycf12, peripheral proteins PsbO, CyanoQ (PsbQ), PsbU, PsbV and a large number of cofactors. It forms dimeric complexes.

It is found in the cellular thylakoid membrane. A core subunit of photosystem II (PSII), probably helps stabilize the reaction center. The protein is Photosystem II reaction center protein Psb30 of Synechococcus sp. (strain JA-3-3Ab) (Cyanobacteria bacterium Yellowstone A-Prime).